Reading from the N-terminus, the 900-residue chain is Alanine--tRNA ligase (900 aa).

Zn(2+)-binding residues include His568, His572, Cys672, and His676.

This sequence belongs to the class-II aminoacyl-tRNA synthetase family. Zn(2+) serves as cofactor.

The protein resides in the cytoplasm. The catalysed reaction is tRNA(Ala) + L-alanine + ATP = L-alanyl-tRNA(Ala) + AMP + diphosphate. Functionally, catalyzes the attachment of alanine to tRNA(Ala) in a two-step reaction: alanine is first activated by ATP to form Ala-AMP and then transferred to the acceptor end of tRNA(Ala). Also edits incorrectly charged Ser-tRNA(Ala) and Gly-tRNA(Ala) via its editing domain. The sequence is that of Alanine--tRNA ligase from Mycoplasma genitalium (strain ATCC 33530 / DSM 19775 / NCTC 10195 / G37) (Mycoplasmoides genitalium).